Consider the following 299-residue polypeptide: Bifunctional phosphoglucose/phosphomannose isomerase (299 aa).

Residues 27-177 enclose the SIS domain; sequence DEVEITPSSR…IHKLMEDFQK (151 aa). The D-fructose 6-phosphate site is built by Gly-44, Ser-45, Ser-84, Ser-86, Thr-89, and Arg-132. Glu-200 serves as the catalytic Proton acceptor. D-fructose 6-phosphate is bound by residues His-216 and Lys-295. Residue His-216 is the Proton donor of the active site. Catalysis depends on Lys-295, which acts as the Proton acceptor.

It belongs to the PGI/PMI family. As to quaternary structure, homodimer.

It catalyses the reaction alpha-D-glucose 6-phosphate = beta-D-fructose 6-phosphate. The enzyme catalyses D-mannose 6-phosphate = D-fructose 6-phosphate. With respect to regulation, presence or absence of metal ions or EDTA does not significantly affect the phosphoglucose isomerase activity. In terms of biological role, dual specificity isomerase that catalyzes the isomerization of both glucose-6-phosphate and mannose-6-phosphate to fructose-6-phosphate with nearly similar catalytic efficiency. Also catalyzes the epimerization of mannose 6-phosphate to glucose 6-phosphate but the rate of epimerization reaction is 20-fold lower than that of isomerization reaction. In Pyrobaculum calidifontis (strain DSM 21063 / JCM 11548 / VA1), this protein is Bifunctional phosphoglucose/phosphomannose isomerase.